The chain runs to 512 residues: UDP-N-acetylmuramate--L-alanine ligase (512 aa).

ATP is bound at residue 132–138; it reads GAHGKTT.

Belongs to the MurCDEF family.

It is found in the cytoplasm. It carries out the reaction UDP-N-acetyl-alpha-D-muramate + L-alanine + ATP = UDP-N-acetyl-alpha-D-muramoyl-L-alanine + ADP + phosphate + H(+). It participates in cell wall biogenesis; peptidoglycan biosynthesis. Functionally, cell wall formation. This chain is UDP-N-acetylmuramate--L-alanine ligase, found in Bifidobacterium longum (strain NCC 2705).